Consider the following 774-residue polypeptide: Chondroitin sulfate synthase 2 (774 aa).

Topologically, residues 1–15 (MRASLLLSVLRPAGP) are cytoplasmic. Residues 16–34 (VAVGISLGFTLSLLSVTWV) traverse the membrane as a helical; Signal-anchor for type II membrane protein segment. At 35–774 (EEPCGPGPPQ…LFEQEQGNST (740 aa)) the chain is on the lumenal side. The disordered stretch occupies residues 37–103 (PCGPGPPQPG…AQPGQATKKA (67 aa)). Residues 54-67 (GNTNAARRPNSVQP) are compositionally biased toward polar residues. Residues Asn138 and Asn361 are each glycosylated (N-linked (GlcNAc...) asparagine). Asp616 serves as a coordination point for a divalent metal cation.

Belongs to the chondroitin N-acetylgalactosaminyltransferase family. In terms of assembly, interacts with PRKN. The cofactor is Mn(2+). It depends on Co(2+) as a cofactor. Isoform 1, isoform 2 and isoform 3 are expressed in brain (at protein level).

The protein localises to the golgi apparatus. It localises to the golgi stack membrane. It is found in the cytoplasm. The protein resides in the cytosol. Its subcellular location is the mitochondrion. The protein localises to the mitochondrion matrix. The enzyme catalyses 3-O-(beta-D-GlcA-(1-&gt;3)-beta-D-GalNAc-(1-&gt;4)-beta-D-GlcA-(1-&gt;3)-beta-D-Gal-(1-&gt;3)-beta-D-Gal-(1-&gt;4)-beta-D-Xyl)-L-seryl-[protein] + UDP-N-acetyl-alpha-D-galactosamine = 3-O-(beta-D-GalNAc-(1-&gt;4)-beta-D-GlcA-(1-&gt;3)-beta-D-GalNAc-(1-&gt;4)-beta-D-GlcA-(1-&gt;3)-beta-D-Gal-(1-&gt;3)-beta-D-Gal-(1-&gt;4)-beta-D-Xyl)-L-seryl-[protein] + UDP + H(+). It carries out the reaction 3-O-{beta-D-GlcA-(1-&gt;3)-[beta-D-GalNAc-(1-&gt;4)-beta-D-GlcA-(1-&gt;3)](n)-beta-D-GalNAc-(1-&gt;4)-beta-D-GlcA-(1-&gt;3)-beta-D-Gal-(1-&gt;3)-beta-D-Gal-(1-&gt;4)-beta-D-Xyl}-L-seryl-[protein] + UDP-N-acetyl-alpha-D-galactosamine = 3-O-{[beta-D-GalNAc-(1-&gt;4)-beta-D-GlcA-(1-&gt;3)](n+1)-beta-D-GalNAc-(1-&gt;4)-beta-D-GlcA-(1-&gt;3)-beta-D-Gal-(1-&gt;3)-beta-D-Gal-(1-&gt;4)-beta-D-Xyl}-L-seryl-[protein] + UDP + H(+). It catalyses the reaction 3-O-(beta-D-GalNAc-(1-&gt;4)-beta-D-GlcA-(1-&gt;3)-beta-D-Gal-(1-&gt;3)-beta-D-Gal-(1-&gt;4)-beta-D-Xyl)-L-seryl-[protein] + UDP-alpha-D-glucuronate = 3-O-(beta-D-GlcA-(1-&gt;3)-beta-D-GalNAc-(1-&gt;4)-beta-D-GlcA-(1-&gt;3)-beta-D-Gal-(1-&gt;3)-beta-D-Gal-(1-&gt;4)-beta-D-Xyl)-L-seryl-[protein] + UDP + H(+). The catalysed reaction is 3-O-{[beta-D-GalNAc-(1-&gt;4)-beta-D-GlcA-(1-&gt;3)](n)-beta-D-GalNAc-(1-&gt;4)-beta-D-GlcA-(1-&gt;3)-beta-D-Gal-(1-&gt;3)-beta-D-Gal-(1-&gt;4)-beta-D-Xyl}-L-seryl-[protein] + UDP-alpha-D-glucuronate = 3-O-{beta-D-GlcA-(1-&gt;3)-[beta-D-GalNAc-(1-&gt;4)-beta-D-GlcA-(1-&gt;3)](n)-beta-D-GalNAc-(1-&gt;4)-beta-D-GlcA-(1-&gt;3)-beta-D-Gal-(1-&gt;3)-beta-D-Gal-(1-&gt;4)-beta-D-Xyl}-L-seryl-[protein] + UDP + H(+). Functionally, has both beta-1,3-glucuronic acid and beta-1,4-N-acetylgalactosamine transferase activity. Transfers glucuronic acid (GlcUA) from UDP-GlcUA and N-acetylgalactosamine (GalNAc) from UDP-GalNAc to the non-reducing end of the elongating chondroitin polymer. Seems to act as a specific activating factor for CHSY1 in chondroitin polymerization. In terms of biological role, may facilitate PRKN transport into the mitochondria. In collaboration with PRKN, may enhance cell viability and protect cells from oxidative stress. This is Chondroitin sulfate synthase 2 from Mus musculus (Mouse).